The following is a 193-amino-acid chain: Ion-translocating oxidoreductase complex subunit A (193 aa).

6 helical membrane-spanning segments follow: residues 5–25 (LLLLVGTVLVNNFVLVQFLGL), 39–59 (IGMSFATVFVMTLASLLSYLV), 72–92 (LTTMSFILVIAVVVQFTEMVV), 102–122 (LLGIFLPLITTNCAVLGVALL), 134–154 (IIYGFGAALGFSLVLIMFSAM), and 171–191 (AIAMITAGLMSLAFLGFTGLV).

It belongs to the NqrDE/RnfAE family. As to quaternary structure, the complex is composed of six subunits: RnfA, RnfB, RnfC, RnfD, RnfE and RnfG.

The protein localises to the cell inner membrane. Its function is as follows. Part of a membrane-bound complex that couples electron transfer with translocation of ions across the membrane. The sequence is that of Ion-translocating oxidoreductase complex subunit A from Colwellia psychrerythraea (strain 34H / ATCC BAA-681) (Vibrio psychroerythus).